The sequence spans 425 residues: Serine hydroxymethyltransferase (425 aa).

Residues leucine 125 and 129-131 (GHL) contribute to the (6S)-5,6,7,8-tetrahydrofolate site. An N6-(pyridoxal phosphate)lysine modification is found at lysine 234.

It belongs to the SHMT family. In terms of assembly, homodimer. Pyridoxal 5'-phosphate is required as a cofactor.

Its subcellular location is the cytoplasm. The catalysed reaction is (6R)-5,10-methylene-5,6,7,8-tetrahydrofolate + glycine + H2O = (6S)-5,6,7,8-tetrahydrofolate + L-serine. It participates in one-carbon metabolism; tetrahydrofolate interconversion. It functions in the pathway amino-acid biosynthesis; glycine biosynthesis; glycine from L-serine: step 1/1. Catalyzes the reversible interconversion of serine and glycine with tetrahydrofolate (THF) serving as the one-carbon carrier. This reaction serves as the major source of one-carbon groups required for the biosynthesis of purines, thymidylate, methionine, and other important biomolecules. Also exhibits THF-independent aldolase activity toward beta-hydroxyamino acids, producing glycine and aldehydes, via a retro-aldol mechanism. The polypeptide is Serine hydroxymethyltransferase (Marinomonas sp. (strain MWYL1)).